Consider the following 198-residue polypeptide: MSLSIDVTSLPSISSSIYKNESSSTTSTLSGKSIGRSEQYISPDAEAFSKYMLSKSPEDIGPSDSASNDPLTSFSNRSNAVKTNADAGVSMDSSTQSRPSSNVGCDQVDFSFNKGIKVSANLDSSVSISTNVKKEKSKNDHRSRKHYPKIEAESDSDDYVLDDSDSDDGKCKNCKYKRKYFALRMRMKRVAMQLIEDL.

Residues 16-30 (SIYKNESSSTTSTLS) show a composition bias toward low complexity. 3 disordered regions span residues 16–37 (SIYK…IGRS), 53–104 (LSKS…SNVG), and 127–167 (SIST…SDSD). Polar residues-rich tracts occupy residues 64-82 (DSAS…NAVK) and 91-104 (MDSS…SNVG). A Phosphoserine; by host CK1 modification is found at serine 67. Aspartate 92 contacts Mg(2+). A compositionally biased stretch (acidic residues) spans 153–166 (ESDSDDYVLDDSDS). Serine 154, serine 156, serine 164, and serine 166 each carry phosphoserine; by host.

The protein belongs to the rotavirus NSP5 family. As to quaternary structure, homodimer. Interacts with VP1. Interacts with VP2. Interacts with NSP2; this interaction leads to up-regulation of NSP5 hyperphosphorylation and formation of virus factories. Interacts with NSP6. Participates in the selective exclusion of host proteins from stress granules (SG) and P bodies (PB). Also participates in the sequestration of these remodeled organelles in viral factories. It depends on Mg(2+) as a cofactor. O-glycosylated. Post-translationally, hyperphosphorylated on serine residues, when in dimeric form. Phosphorylation by host CK1 is required for the hyperphosphorylation of NSP5 dimer.

It localises to the host cytoplasm. In terms of biological role, plays an essential role in the viral genome replication. Participates, together with NSP2, in the formation of viral factories (viroplasms), which are large inclusions in the host cytoplasm where replication intermediates are assembled and viral RNA replication takes place. Orchestrates the recruitment of viroplasmic proteins such as capsid proteins to these factories. Participates in the selective exclusion of host proteins from stress granules (SG) and P bodies (PB). Also participates in the sequestration of these remodeled organelles in viral factories. This Rotavirus A (strain RVA/Human/Japan/K8/1977/G1P3A[9]) (RV-A) protein is Non-structural protein 5.